The sequence spans 185 residues: Transcription factor FapR (185 aa).

It belongs to the FapR family.

Transcriptional factor involved in regulation of membrane lipid biosynthesis by repressing genes involved in fatty acid and phospholipid metabolism. The sequence is that of Transcription factor FapR from Staphylococcus aureus (strain Mu3 / ATCC 700698).